Consider the following 228-residue polypeptide: Orotidine 5'-phosphate decarboxylase (228 aa).

Residues Asp11, Lys33, 60–69 (DLKLHDIPNT), Thr117, Arg178, Gln186, Gly206, and Arg207 contribute to the substrate site. Lys62 serves as the catalytic Proton donor.

This sequence belongs to the OMP decarboxylase family. Type 1 subfamily. As to quaternary structure, homodimer.

It carries out the reaction orotidine 5'-phosphate + H(+) = UMP + CO2. It functions in the pathway pyrimidine metabolism; UMP biosynthesis via de novo pathway; UMP from orotate: step 2/2. Functionally, catalyzes the decarboxylation of orotidine 5'-monophosphate (OMP) to uridine 5'-monophosphate (UMP). In Ehrlichia canis (strain Jake), this protein is Orotidine 5'-phosphate decarboxylase.